The primary structure comprises 105 residues: Large ribosomal subunit protein uL24 (105 aa).

It belongs to the universal ribosomal protein uL24 family. Part of the 50S ribosomal subunit.

Functionally, one of two assembly initiator proteins, it binds directly to the 5'-end of the 23S rRNA, where it nucleates assembly of the 50S subunit. One of the proteins that surrounds the polypeptide exit tunnel on the outside of the subunit. This is Large ribosomal subunit protein uL24 from Beijerinckia indica subsp. indica (strain ATCC 9039 / DSM 1715 / NCIMB 8712).